The sequence spans 300 residues: HTH-type transcriptional regulator ArgP (300 aa).

The HTH lysR-type domain occupies 4–60 (PDYRTLQALDAVIRERGFERAAQKLCITQSAVSQRIKQLENLFGQPLLVRTVPPRPT). A DNA-binding region (H-T-H motif) is located at residues 21-40 (FERAAQKLCITQSAVSQRIK).

The protein belongs to the LysR transcriptional regulatory family. In terms of assembly, homodimer.

Controls the transcription of genes involved in arginine and lysine metabolism. The polypeptide is HTH-type transcriptional regulator ArgP (Photorhabdus laumondii subsp. laumondii (strain DSM 15139 / CIP 105565 / TT01) (Photorhabdus luminescens subsp. laumondii)).